Reading from the N-terminus, the 339-residue chain is Ornithine carbamoyltransferase (339 aa).

Carbamoyl phosphate contacts are provided by residues 56-59, R107, and 134-137; these read STRT and HPTQ. L-ornithine contacts are provided by residues N168, D232, and 236–237; that span reads SM. Residues 274 to 275 and R320 each bind carbamoyl phosphate; that span reads CL.

The protein belongs to the aspartate/ornithine carbamoyltransferase superfamily. OTCase family.

Its subcellular location is the cytoplasm. The catalysed reaction is carbamoyl phosphate + L-ornithine = L-citrulline + phosphate + H(+). The protein operates within amino-acid biosynthesis; L-arginine biosynthesis; L-arginine from L-ornithine and carbamoyl phosphate: step 1/3. Functionally, reversibly catalyzes the transfer of the carbamoyl group from carbamoyl phosphate (CP) to the N(epsilon) atom of ornithine (ORN) to produce L-citrulline. The sequence is that of Ornithine carbamoyltransferase from Buchnera aphidicola subsp. Baizongia pistaciae (strain Bp).